The chain runs to 180 residues: Cytokinin-beta-glucosidase (180 aa).

A compositionally biased stretch (basic and acidic residues) spans 26–37; that stretch reads KHIQSASKERTP. Residues 26–54 are disordered; the sequence is KHIQSASKERTPLTEPGEGQSMDIDEEGG.

Functionally, hydrolyzes cytokinin glucosides thus liberating free cytokinins. Contributes to the root inducing activity. The protein is Cytokinin-beta-glucosidase (rolC) of Rhizobium rhizogenes (Agrobacterium rhizogenes).